We begin with the raw amino-acid sequence, 172 residues long: Large ribosomal subunit protein uL10 (172 aa).

Belongs to the universal ribosomal protein uL10 family. As to quaternary structure, part of the ribosomal stalk of the 50S ribosomal subunit. The N-terminus interacts with L11 and the large rRNA to form the base of the stalk. The C-terminus forms an elongated spine to which L12 dimers bind in a sequential fashion forming a multimeric L10(L12)X complex.

Its function is as follows. Forms part of the ribosomal stalk, playing a central role in the interaction of the ribosome with GTP-bound translation factors. This is Large ribosomal subunit protein uL10 from Chelativorans sp. (strain BNC1).